The sequence spans 283 residues: NAD kinase (283 aa).

Asp-68 (proton acceptor) is an active-site residue. Residues 68-69, 142-143, Arg-153, Asp-172, 183-188, and Gln-242 contribute to the NAD(+) site; these read DG, ND, and TAYSLS.

Belongs to the NAD kinase family. The cofactor is a divalent metal cation.

It is found in the cytoplasm. The catalysed reaction is NAD(+) + ATP = ADP + NADP(+) + H(+). In terms of biological role, involved in the regulation of the intracellular balance of NAD and NADP, and is a key enzyme in the biosynthesis of NADP. Catalyzes specifically the phosphorylation on 2'-hydroxyl of the adenosine moiety of NAD to yield NADP. This Thermoanaerobacter pseudethanolicus (strain ATCC 33223 / 39E) (Clostridium thermohydrosulfuricum) protein is NAD kinase.